A 56-amino-acid polypeptide reads, in one-letter code: Bowman-Birk type proteinase inhibitor I-2B (56 aa).

Intrachain disulfides connect C10-C25, C15-C23, C32-C39, and C36-C51.

This sequence belongs to the Bowman-Birk serine protease inhibitor family.

The protein is Bowman-Birk type proteinase inhibitor I-2B of Triticum aestivum (Wheat).